Consider the following 358-residue polypeptide: DNA integrity scanning protein DisA (358 aa).

Positions 6–144 constitute a DAC domain; sequence RPTLREAVAR…RGERHVLTDS (139 aa). ATP-binding positions include Gly73, Leu91, and 104–108; that span reads TRHRS.

Belongs to the DisA family. Homooctamer. Mg(2+) is required as a cofactor.

It catalyses the reaction 2 ATP = 3',3'-c-di-AMP + 2 diphosphate. Its function is as follows. Participates in a DNA-damage check-point. DisA forms globular foci that rapidly scan along the chromosomes searching for lesions. In terms of biological role, also has diadenylate cyclase activity, catalyzing the condensation of 2 ATP molecules into cyclic di-AMP (c-di-AMP). c-di-AMP likely acts as a signaling molecule that may couple DNA integrity with a cellular process. This is DNA integrity scanning protein DisA from Mycobacterium bovis (strain ATCC BAA-935 / AF2122/97).